The sequence spans 226 residues: MAAMRWRWWQRLLPWRLLQARGFPQNSAPSLGLGARTYSQGDCSYSRTALYDLLGVPSTATQAQIKAAYYRQCFLYHPDRNSGSAEAAERFTRISQAYVVLGSATLRRKYDRGLLSDEDLRGPGVRPSRTPAPDPGSPRTPPPTSRTHDGSRASPGANRTMFNFDAFYQAHYGEQLERERRLRARREALRKRQEYRSMKGLRWEDTRDTAAIFLIFSIFIIIGFYI.

Residues 1-38 constitute a mitochondrion transit peptide; sequence MAAMRWRWWQRLLPWRLLQARGFPQNSAPSLGLGARTY. In terms of domain architecture, J spans 49–114; it reads ALYDLLGVPS…TLRRKYDRGL (66 aa). The segment at 116 to 157 is disordered; the sequence is SDEDLRGPGVRPSRTPAPDPGSPRTPPPTSRTHDGSRASPGA. The segment covering 130–144 has biased composition (pro residues); the sequence is TPAPDPGSPRTPPPT. The helical transmembrane segment at 208–225 threads the bilayer; it reads DTAAIFLIFSIFIIIGFY.

As to quaternary structure, associates with the ATP synthase complex. Interacts with MT-ATP6; interaction is direct. Interacts with ATP5MC2; interaction is direct. In terms of tissue distribution, expressed in brain, heart, kidney, liver, lung, spleen, stomach and testis. Highly expressed in the brain. In the neocortex, expressed in most, if not all, glutamatergic excitatory projection neurons (pyramidal) and many interneurons, with the strongest signal noticeably in large pyramidal neurons of layer 3C. Also present in pyramidal neurons of layer 3C PNs of the superior temporal cortex, as well as in pyramidal neurons (Betz cells) of the layer 5B primary motor cortex (at protein level).

It localises to the mitochondrion inner membrane. Its function is as follows. Mitochondrial protein enriched in neurons that acts as a regulator of mitochondrial respiration. Associates with the ATP synthase complex and facilitates ATP synthesis. May be a chaperone protein involved in the turnover of the subunits of mitochondrial complex I N-module. It facilitates the degradation of N-module subunits damaged by oxidative stress, and contributes to complex I functional efficiency. This Homo sapiens (Human) protein is DnaJ homolog subfamily C member 30, mitochondrial.